Here is a 462-residue protein sequence, read N- to C-terminus: Zinc finger CCCH domain-containing protein 8 (462 aa).

6 C3H1-type zinc fingers span residues 105-133 (RPGE…HPQW), 156-184 (QEGE…HPKE), 209-237 (RPSE…HPKD), 288-316 (RPGE…HPDR), 367-395 (RPGA…HPID), and 422-450 (REDA…HPPP).

This chain is Zinc finger CCCH domain-containing protein 8, found in Oryza sativa subsp. japonica (Rice).